Reading from the N-terminus, the 343-residue chain is Heat-inducible transcription repressor HrcA (343 aa).

It belongs to the HrcA family.

Functionally, negative regulator of class I heat shock genes (grpE-dnaK-dnaJ and groELS operons). Prevents heat-shock induction of these operons. The sequence is that of Heat-inducible transcription repressor HrcA from Lysinibacillus sphaericus (Bacillus sphaericus).